Consider the following 374-residue polypeptide: Anhydro-N-acetylmuramic acid kinase (374 aa).

12 to 19 provides a ligand contact to ATP; the sequence is GTSLDGVD.

Belongs to the anhydro-N-acetylmuramic acid kinase family.

It carries out the reaction 1,6-anhydro-N-acetyl-beta-muramate + ATP + H2O = N-acetyl-D-muramate 6-phosphate + ADP + H(+). Its pathway is amino-sugar metabolism; 1,6-anhydro-N-acetylmuramate degradation. It functions in the pathway cell wall biogenesis; peptidoglycan recycling. Functionally, catalyzes the specific phosphorylation of 1,6-anhydro-N-acetylmuramic acid (anhMurNAc) with the simultaneous cleavage of the 1,6-anhydro ring, generating MurNAc-6-P. Is required for the utilization of anhMurNAc either imported from the medium or derived from its own cell wall murein, and thus plays a role in cell wall recycling. The protein is Anhydro-N-acetylmuramic acid kinase of Salmonella arizonae (strain ATCC BAA-731 / CDC346-86 / RSK2980).